The sequence spans 705 residues: Ribosomal RNA large subunit methyltransferase K/L (705 aa).

The 112-residue stretch at 43–154 (LLYQSLLWSR…RDTASVALDL (112 aa)) folds into the THUMP domain.

Belongs to the methyltransferase superfamily. RlmKL family.

The protein resides in the cytoplasm. It carries out the reaction guanosine(2445) in 23S rRNA + S-adenosyl-L-methionine = N(2)-methylguanosine(2445) in 23S rRNA + S-adenosyl-L-homocysteine + H(+). It catalyses the reaction guanosine(2069) in 23S rRNA + S-adenosyl-L-methionine = N(2)-methylguanosine(2069) in 23S rRNA + S-adenosyl-L-homocysteine + H(+). Functionally, specifically methylates the guanine in position 2445 (m2G2445) and the guanine in position 2069 (m7G2069) of 23S rRNA. The polypeptide is Ribosomal RNA large subunit methyltransferase K/L (Pectobacterium atrosepticum (strain SCRI 1043 / ATCC BAA-672) (Erwinia carotovora subsp. atroseptica)).